A 235-amino-acid chain; its full sequence is Small ribosomal subunit protein uS2 (235 aa).

It belongs to the universal ribosomal protein uS2 family.

The protein is Small ribosomal subunit protein uS2 of Thermoanaerobacter sp. (strain X514).